The following is a 503-amino-acid chain: Plant-specific TFIIB-related protein 1 (503 aa).

Residues 1–33 form a TFIIB-type zinc finger; it reads MKCPYCSSAQGRCTTTSSGRSITECSSCGRVME. Disordered regions lie at residues 328-366, 411-431, 436-455, and 468-503; these read PEKAFPTTTISTTRSTTPRAVDPPEPSFVEKDKPSAKPI, NAMDYEKQQLDKQQQQQLGDK, IYLRDHNPFPSNPSPSTGIS, and GSSSNLPVIHPPKLPPGYAEIRGSGSRNADNPHGDF. Residues 333–346 are compositionally biased toward low complexity; that stretch reads PTTTISTTRSTTPR. The segment covering 355-366 has biased composition (basic and acidic residues); the sequence is FVEKDKPSAKPI.

Ubiquinated. Subsequent degradation by the proteasome pathway. Widely expressed.

Its subcellular location is the plastid. The protein resides in the chloroplast outer membrane. It localises to the nucleus. In terms of biological role, plant-specific TFIIB-related protein that may be involved in an intracellular signaling pathway between plastids and the nucleus. May act as general transcription factor (GTF) of RNA polymerase I-dependent transcription and rRNA synthesis. Forms a ternary complex with TBP2 and the rDNA promoter region. The chain is Plant-specific TFIIB-related protein 1 from Arabidopsis thaliana (Mouse-ear cress).